The chain runs to 928 residues: MVKLSIVLTPQFLSHDQGQLTKELQQHVKSVTCPCEYLRKVINTLADHHHRGTDFGGSPWLHVIIAFPTSYKVVITLWIVYLWVSLLKTIFWSRNGHDGSTDVQQRAWRSNRRRQEGLRSICMHTKKRVSSFRGNKIGLKDVITLRRHVETKVRAKIRKRKVTTKINHHDKINGKRKTARKQKMFQRAQELRRRAEDYHKCKIPPSARKALCNWVRMAAAEHRHSSGLPYWPYLTAETLKNRMGHQPPPPTQQHSITDNSLSLKTPPECVLTPLPPSADDNLKTPPECVLTPLPPSADDNLKTPPECLLTPLPPSADDNLKTPPECLLTPLPPSADDNLKTPPECLLTPLPPSAPPSAPPSADDNLKTRAECLLHPLPPSADDNLKTPSERQLTPLPPSAPPSADDNIKTPAERLRGPLPPSADDNLKTPSERQLTPLPPSAPPSADDNIKTPAFHPQRMIISRHLPSVSSLPFHPQLHSQQMIISRYLLSVCGFRFHHQPMIISRHLPSVSSLPFHPQLHPQQMIISRHLPSVCGGRFHPQRMIISRHLPSVSSLPFHPQLHPQQMIISRHLPSVCGGRFHPQRMIISRHLPSVSSLPFHPQLHPQQMIISRHLPSVCGGRFHPQRMIISRHLPSVSSLPFHPQLHPQQMIISRHLPSVCGERLRGPLPPSADDNLKTPSERQLTPLPPSAPPSADDNIKTPAERLRGPLPPSADDNLKTPSERQLTPLPPSAPPSADDNIKTPAERLRGPLPPSADDNLKTPSERQLTPLPPSAPPSADDNIKTPAERLRGPLPPSADDNLKTPPLATQEAEAEKPRKPKRQRAAEMEPPPEPKRRRVGDVEPSRKPKRRRAADVEPSSPEPKRRRVGDVEPSRKPKRRRAADVEPSSPEPKRRRVGDVEPSRKPKRRRAADVEPSLPEPKRRRLS.

Residues 73–93 traverse the membrane as a helical segment; the sequence is VVITLWIVYLWVSLLKTIFWS. Disordered stretches follow at residues 242 to 452 and 663 to 928; these read RMGH…NIKT and ERLR…RRLS. A compositionally biased stretch (polar residues) spans 252–263; sequence QQHSITDNSLSL. A compositionally biased stretch (pro residues) spans 349-359; that stretch reads PLPPSAPPSAP. Composition is skewed to basic and acidic residues over residues 406–416, 698–708, 740–750, and 782–792; these read DNIKTPAERLR.

The protein belongs to the NPIP family.

It localises to the membrane. This is Nuclear pore complex-interacting protein family member B12 from Homo sapiens (Human).